Here is a 376-residue protein sequence, read N- to C-terminus: Ribonucleoside-diphosphate reductase subunit beta (376 aa).

Positions 85, 116, and 119 each coordinate Fe cation. The active site involves Tyr123. The Fe cation site is built by Glu205, Glu239, and His242.

The protein belongs to the ribonucleoside diphosphate reductase small chain family. As to quaternary structure, tetramer of two alpha and two beta subunits. The cofactor is Fe cation.

The catalysed reaction is a 2'-deoxyribonucleoside 5'-diphosphate + [thioredoxin]-disulfide + H2O = a ribonucleoside 5'-diphosphate + [thioredoxin]-dithiol. Functionally, provides the precursors necessary for DNA synthesis. Catalyzes the biosynthesis of deoxyribonucleotides from the corresponding ribonucleotides. This is Ribonucleoside-diphosphate reductase subunit beta (nrdB) from Haemophilus influenzae (strain ATCC 51907 / DSM 11121 / KW20 / Rd).